The primary structure comprises 96 residues: Gastrolith matrix protein (96 aa).

A run of 9 repeats spans residues 11-15, 16-20, 21-25, 30-34, 35-39, 50-54, 55-59, 65-69, and 70-74. The segment at 11–74 is 9 X 5 AA tandem repeat of G-S-X-X-F; that stretch reads GSAGFGSTNF…GSTGFGSSSF (64 aa). The segment at 75-96 is disordered; the sequence is GSTSGLPYLVVIPNNPAVGGLR.

Post-translationally, the N-terminus is blocked. In terms of tissue distribution, expressed in the gastroliths.

Its subcellular location is the secreted. In terms of biological role, associates with chitin and plays a role in calcification. This is Gastrolith matrix protein from Procambarus clarkii (Red swamp crayfish).